We begin with the raw amino-acid sequence, 391 residues long: Response regulator aspartate phosphatase I (391 aa).

TPR repeat units lie at residues 62–95, 150–183, 184–217, 224–257, 275–311, and 338–371; these read LEFR…EKQG, SYVY…AVQT, VRCQ…SKES, AMSH…FEKS, KQQN…LEGL, and ENFS…RRKI.

It belongs to the Rap family.

It is found in the cytoplasm. With respect to regulation, inhibited by PhrI. Its function is as follows. Activates ICEBs1 gene expression, excision and transfer by inactivating the ICEBs1 repressor protein ImmR. RapI-mediated induction likely results from an increase in the specific activity of the protease ImmA, which mediates proteolysis of ImmR. In addition, is involved in regulation of sporulation. Acts as a phosphatase that specifically dephosphorylates the sporulation initiation phosphotransferase Spo0F and inhibits its activity. The polypeptide is Response regulator aspartate phosphatase I (rapI) (Bacillus subtilis (strain 168)).